We begin with the raw amino-acid sequence, 272 residues long: 3-methyl-2-oxobutanoate hydroxymethyltransferase (272 aa).

Mg(2+) contacts are provided by aspartate 50 and aspartate 89. Residues 50-51 (DS), aspartate 89, and lysine 119 each bind 3-methyl-2-oxobutanoate. Glutamate 121 is a Mg(2+) binding site. Glutamate 188 functions as the Proton acceptor in the catalytic mechanism.

This sequence belongs to the PanB family. As to quaternary structure, homodecamer; pentamer of dimers. Requires Mg(2+) as cofactor.

The protein localises to the cytoplasm. It catalyses the reaction 3-methyl-2-oxobutanoate + (6R)-5,10-methylene-5,6,7,8-tetrahydrofolate + H2O = 2-dehydropantoate + (6S)-5,6,7,8-tetrahydrofolate. It participates in cofactor biosynthesis; (R)-pantothenate biosynthesis; (R)-pantoate from 3-methyl-2-oxobutanoate: step 1/2. Its function is as follows. Catalyzes the reversible reaction in which hydroxymethyl group from 5,10-methylenetetrahydrofolate is transferred onto alpha-ketoisovalerate to form ketopantoate. This is 3-methyl-2-oxobutanoate hydroxymethyltransferase from Methylobacterium radiotolerans (strain ATCC 27329 / DSM 1819 / JCM 2831 / NBRC 15690 / NCIMB 10815 / 0-1).